The chain runs to 994 residues: cGMP-dependent protein kinase (994 aa).

The segment at 1–162 (MGACISKNSS…QDDSHTEEEK (162 aa)) is disordered. G2 is lipidated: N-myristoyl glycine. Residue C4 is the site of S-palmitoyl cysteine attachment. Composition is skewed to low complexity over residues 9–22 (SSAR…LSAS) and 33–46 (GAAG…GAAE). Basic and acidic residues-rich tracts occupy residues 65 to 80 (ELER…REEP) and 133 to 162 (EGPK…EEEK). CNMP-binding domain stretches follow at residues 189–305 (VCSS…FLAS), 308–407 (FFEM…RVLG), 463–539 (GIRF…ATLG), and 561–660 (IFRY…NEII). 5 residues coordinate 3',5'-cyclic GMP: G253, E254, A256, R263, and S264. 6 residues coordinate 3',5'-cyclic GMP: R616, G625, E626, A628, R635, and T636. Residues 684 to 941 (LQVVRVVGRG…YKDIKEHAFF (258 aa)) form the Protein kinase domain. Residues 690-698 (VGRGTFGTV) and K713 contribute to the ATP site. The Proton acceptor role is filled by D807. Positions 942-994 (GDFDWDKLAGRGLPPPLAPKGETYAEDTEQSSFELDEDDTIVLEDEYDWDKDF) constitute an AGC-kinase C-terminal domain. A disordered region spans residues 954–976 (LPPPLAPKGETYAEDTEQSSFEL). A compositionally biased stretch (acidic residues) spans 965-976 (YAEDTEQSSFEL).

The protein belongs to the protein kinase superfamily. AGC Ser/Thr protein kinase family. cGMP subfamily. Mg(2+) is required as a cofactor.

Its subcellular location is the cytoplasm. The protein localises to the membrane. It localises to the cell membrane. It catalyses the reaction L-seryl-[protein] + ATP = O-phospho-L-seryl-[protein] + ADP + H(+). The catalysed reaction is L-threonyl-[protein] + ATP = O-phospho-L-threonyl-[protein] + ADP + H(+). Its activity is regulated as follows. Activated by cGMP. The cGMP-binding domains acts cooperatively to activate PKG. Inhibited by the antiparasitic small molecule 4-[2-(4-fluorophenyl)-5-(1-methylpiperidine-4-yl)-1Hpyrrol- 3-yl]pyridine (compound 1). Its function is as follows. Serine/threonine protein kinase which acts as a downstream effector of the second messenger cGMP. Plays an essential role in tachyzoite invasion of and egress from host cells. During invasion of host cells, regulates the apico-basal flux of F-actin probably via Ca(2+)-mediated activation of CDPK1. In tachyzoites, required for microneme secretion. Required for tachyzoite gliding motility. Plays an essential role in parasite invasion of and egress from host cells, and microneme secretion. In terms of biological role, dispensable for parasite invasion of and egress from host cells, and microneme secretion. This Toxoplasma gondii protein is cGMP-dependent protein kinase.